The primary structure comprises 342 residues: Anthranilate phosphoribosyltransferase (342 aa).

Residues G81, G84–D85, T89, N91–T94, K109–S117, and T121 contribute to the 5-phospho-alpha-D-ribose 1-diphosphate site. G81 provides a ligand contact to anthranilate. A Mg(2+)-binding site is contributed by S93. N112 is a binding site for anthranilate. R167 is a binding site for anthranilate. Mg(2+) contacts are provided by D225 and E226.

It belongs to the anthranilate phosphoribosyltransferase family. As to quaternary structure, homodimer. Mg(2+) is required as a cofactor.

The catalysed reaction is N-(5-phospho-beta-D-ribosyl)anthranilate + diphosphate = 5-phospho-alpha-D-ribose 1-diphosphate + anthranilate. It participates in amino-acid biosynthesis; L-tryptophan biosynthesis; L-tryptophan from chorismate: step 2/5. Its function is as follows. Catalyzes the transfer of the phosphoribosyl group of 5-phosphorylribose-1-pyrophosphate (PRPP) to anthranilate to yield N-(5'-phosphoribosyl)-anthranilate (PRA). The protein is Anthranilate phosphoribosyltransferase of Agrobacterium fabrum (strain C58 / ATCC 33970) (Agrobacterium tumefaciens (strain C58)).